A 296-amino-acid polypeptide reads, in one-letter code: Protoheme IX farnesyltransferase (296 aa).

The next 9 membrane-spanning stretches (helical) occupy residues 14 to 34 (IIFG…KGVI), 36 to 56 (YPLF…GCVF), 75 to 95 (VLVK…ILGI), 99 to 119 (LLLY…GFVI), 133 to 153 (VYGT…GYCA), 163 to 183 (LILL…IAIF), 209 to 229 (ITLY…SGYA), 234 to 254 (LVVA…GYKA), and 265 to 285 (FVFS…DFNV).

The protein belongs to the UbiA prenyltransferase family. Protoheme IX farnesyltransferase subfamily.

The protein localises to the cell inner membrane. It catalyses the reaction heme b + (2E,6E)-farnesyl diphosphate + H2O = Fe(II)-heme o + diphosphate. It functions in the pathway porphyrin-containing compound metabolism; heme O biosynthesis; heme O from protoheme: step 1/1. Functionally, converts heme B (protoheme IX) to heme O by substitution of the vinyl group on carbon 2 of heme B porphyrin ring with a hydroxyethyl farnesyl side group. This is Protoheme IX farnesyltransferase from Yersinia enterocolitica serotype O:8 / biotype 1B (strain NCTC 13174 / 8081).